Reading from the N-terminus, the 510-residue chain is NAD(P)H-quinone oxidoreductase subunit 2 A, chloroplastic (510 aa).

12 helical membrane-spanning segments follow: residues 31-51 (FIFP…IDLT), 59-79 (WFYF…LFRW), 99-119 (IFQF…VEYI), 124-144 (MAIT…MFLC), 149-169 (LITI…LSGY), 183-203 (YLLM…WLYG), 229-249 (ISIA…PAPF), 295-315 (WHLL…LLAI), 323-343 (MLAY…IVGD), 354-374 (YMLF…LFGL), 395-415 (ALSL…AGFF), and 418-438 (LYLF…IGLL).

Belongs to the complex I subunit 2 family. In terms of assembly, NDH is composed of at least 16 different subunits, 5 of which are encoded in the nucleus.

The protein resides in the plastid. Its subcellular location is the chloroplast thylakoid membrane. It catalyses the reaction a plastoquinone + NADH + (n+1) H(+)(in) = a plastoquinol + NAD(+) + n H(+)(out). It carries out the reaction a plastoquinone + NADPH + (n+1) H(+)(in) = a plastoquinol + NADP(+) + n H(+)(out). In terms of biological role, NDH shuttles electrons from NAD(P)H:plastoquinone, via FMN and iron-sulfur (Fe-S) centers, to quinones in the photosynthetic chain and possibly in a chloroplast respiratory chain. The immediate electron acceptor for the enzyme in this species is believed to be plastoquinone. Couples the redox reaction to proton translocation, and thus conserves the redox energy in a proton gradient. This is NAD(P)H-quinone oxidoreductase subunit 2 A, chloroplastic from Oryza nivara (Indian wild rice).